The primary structure comprises 109 residues: Nucleoid-associated protein Cvib_1034 (109 aa).

This sequence belongs to the YbaB/EbfC family. As to quaternary structure, homodimer.

Its subcellular location is the cytoplasm. It localises to the nucleoid. Its function is as follows. Binds to DNA and alters its conformation. May be involved in regulation of gene expression, nucleoid organization and DNA protection. This Chlorobium phaeovibrioides (strain DSM 265 / 1930) (Prosthecochloris vibrioformis (strain DSM 265)) protein is Nucleoid-associated protein Cvib_1034.